A 258-amino-acid chain; its full sequence is Acetylglutamate kinase (258 aa).

Residues 44-45 (GG), R66, and N158 each bind substrate. ATP-binding positions include 181-186 (DVSGIL) and 209-211 (IIT).

The protein belongs to the acetylglutamate kinase family. ArgB subfamily. As to quaternary structure, homodimer.

It localises to the cytoplasm. It catalyses the reaction N-acetyl-L-glutamate + ATP = N-acetyl-L-glutamyl 5-phosphate + ADP. It functions in the pathway amino-acid biosynthesis; L-arginine biosynthesis; N(2)-acetyl-L-ornithine from L-glutamate: step 2/4. Its function is as follows. Catalyzes the ATP-dependent phosphorylation of N-acetyl-L-glutamate. This chain is Acetylglutamate kinase, found in Shigella dysenteriae serotype 1 (strain Sd197).